The primary structure comprises 232 residues: Ion-translocating oxidoreductase complex subunit E (232 aa).

6 helical membrane passes run 18–38 (GLVQLLGLCPLLAVTATLTNA), 39–59 (IGLGLATLVVLVGSNVLVSLV), 69–89 (IPVFVMIIAALVTCVQLLINA), 93–113 (GLYLSLGIFLPLIVTNCVIIG), 127–147 (AAFDGLMMGLGFTLVLMLLGA), and 182–202 (NFLLAMLPPGAFIAMGFLIAI).

This sequence belongs to the NqrDE/RnfAE family. The complex is composed of six subunits: RnfA, RnfB, RnfC, RnfD, RnfE and RnfG.

The protein localises to the cell inner membrane. In terms of biological role, part of a membrane-bound complex that couples electron transfer with translocation of ions across the membrane. The sequence is that of Ion-translocating oxidoreductase complex subunit E from Shewanella loihica (strain ATCC BAA-1088 / PV-4).